A 389-amino-acid polypeptide reads, in one-letter code: UDP-GlcNAc:betaGal beta-1,3-N-acetylglucosaminyltransferase 8 (389 aa).

Residues 1–7 (MRCRKCQ) lie on the Cytoplasmic side of the membrane. The chain crosses the membrane as a helical; Signal-anchor for type II membrane protein span at residues 8–24 (LCLSALLTLLGLKVYIE). At 25 to 389 (WTSESWLKKA…RHLWVPELQC (365 aa)) the chain is on the lumenal side. The disordered stretch occupies residues 36–57 (PRGALPSPTPPNAEPTLPTNLS). N-linked (GlcNAc...) asparagine glycosylation is found at N55 and N212.

This sequence belongs to the glycosyltransferase 31 family. Interacts with B3GNT2; this interaction greatly increases B3GNT2 catalytic activity, independently of B3GNT8 enzymatic activity.

The protein localises to the golgi apparatus membrane. Its pathway is protein modification; protein glycosylation. Functionally, beta-1,3-N-acetylglucosaminyltransferase that plays a role in the elongation of specific branch structures of multiantennary N-glycans. Has strong activity towards tetraantennary N-glycans and 2,6 triantennary glycans. This chain is UDP-GlcNAc:betaGal beta-1,3-N-acetylglucosaminyltransferase 8, found in Mus musculus (Mouse).